The sequence spans 428 residues: Tyrosine--tRNA ligase (428 aa).

Y41 lines the L-tyrosine pocket. A 'HIGH' region motif is present at residues 46 to 55; it reads PTADSLHLGH. Position 148 is an N6-acetyllysine (K148). Y179 and Q183 together coordinate L-tyrosine. The 'KMSKS' region motif lies at 239–243; it reads KFGKT. K242 provides a ligand contact to ATP. Positions 361-418 constitute an S4 RNA-binding domain; that stretch reads ADLMQALVDSELQPSRGQARKTIASNAITINGEKQSDPEYFFKEEDRLFGRFTLLRRG.

This sequence belongs to the class-I aminoacyl-tRNA synthetase family. TyrS type 1 subfamily. As to quaternary structure, homodimer.

It localises to the cytoplasm. It carries out the reaction tRNA(Tyr) + L-tyrosine + ATP = L-tyrosyl-tRNA(Tyr) + AMP + diphosphate + H(+). In terms of biological role, catalyzes the attachment of tyrosine to tRNA(Tyr) in a two-step reaction: tyrosine is first activated by ATP to form Tyr-AMP and then transferred to the acceptor end of tRNA(Tyr). This Escherichia coli O1:K1 / APEC protein is Tyrosine--tRNA ligase.